Reading from the N-terminus, the 339-residue chain is Heat-inducible transcription repressor HrcA (339 aa).

It belongs to the HrcA family.

In terms of biological role, negative regulator of class I heat shock genes (grpE-dnaK-dnaJ and groELS operons). Prevents heat-shock induction of these operons. This is Heat-inducible transcription repressor HrcA from Parafrankia sp. (strain EAN1pec).